The following is a 711-amino-acid chain: Putative membrane protein IgaA homolog (711 aa).

Methionine 1 is a topological domain (periplasmic). A helical transmembrane segment spans residues serine 2–isoleucine 22. Residues lysine 23–arginine 204 are Cytoplasmic-facing. 2 helical membrane passes run glutamate 205 to valine 225 and phenylalanine 226 to phenylalanine 246. Residues alanine 247–arginine 339 are Cytoplasmic-facing. A helical membrane pass occupies residues serine 340–leucine 360. The Periplasmic portion of the chain corresponds to aspartate 361–tyrosine 655. Residues leucine 656–alanine 676 traverse the membrane as a helical segment. The Cytoplasmic portion of the chain corresponds to tryptophan 677–glutamate 711.

It belongs to the IgaA family.

It localises to the cell inner membrane. The chain is Putative membrane protein IgaA homolog (yrfF) from Escherichia coli (strain K12).